The following is a 104-amino-acid chain: Protein METHYLENE BLUE SENSITIVITY 2 (104 aa).

Residues 1-11 are compositionally biased toward basic residues; it reads MTGKAKPKKHT. Disordered regions lie at residues 1-46 and 64-104; these read MTGK…GHAK and IHHE…SLKK. Basic and acidic residues-rich tracts occupy residues 36–46 and 73–82; these read RTGKEKGGHAK and LTYEEPRNLH.

The protein resides in the nucleus. It is found in the cytoplasm. The protein localises to the stress granule. Required for acclimation to reactive oxygen species (ROS) responses downstream of beta-cyclocitral, including singlet oxygen 1O(2) detoxification reactions, especially upon light-mediated photooxidative stress, and leading to programmed cell death. Prevents leaf senescence. The sequence is that of Protein METHYLENE BLUE SENSITIVITY 2 from Arabidopsis thaliana (Mouse-ear cress).